The following is a 169-amino-acid chain: Peptide deformylase (169 aa).

The Fe cation site is built by cysteine 91 and histidine 133. Residue glutamate 134 is part of the active site. Histidine 137 provides a ligand contact to Fe cation.

The protein belongs to the polypeptide deformylase family. Fe(2+) serves as cofactor.

The catalysed reaction is N-terminal N-formyl-L-methionyl-[peptide] + H2O = N-terminal L-methionyl-[peptide] + formate. Its function is as follows. Removes the formyl group from the N-terminal Met of newly synthesized proteins. Requires at least a dipeptide for an efficient rate of reaction. N-terminal L-methionine is a prerequisite for activity but the enzyme has broad specificity at other positions. The polypeptide is Peptide deformylase (Haemophilus influenzae (strain ATCC 51907 / DSM 11121 / KW20 / Rd)).